The primary structure comprises 147 residues: Large ribosomal subunit protein bL9 (147 aa).

Belongs to the bacterial ribosomal protein bL9 family.

Functionally, binds to the 23S rRNA. The sequence is that of Large ribosomal subunit protein bL9 from Campylobacter jejuni subsp. jejuni serotype O:23/36 (strain 81-176).